An 86-amino-acid chain; its full sequence is Small ribosomal subunit protein bS18 (86 aa).

A disordered region spans residues 1–20; the sequence is MSREEGNNGRRPGGKMRRSR.

This sequence belongs to the bacterial ribosomal protein bS18 family. In terms of assembly, part of the 30S ribosomal subunit. Forms a tight heterodimer with protein bS6.

Functionally, binds as a heterodimer with protein bS6 to the central domain of the 16S rRNA, where it helps stabilize the platform of the 30S subunit. This is Small ribosomal subunit protein bS18 from Clostridium beijerinckii (strain ATCC 51743 / NCIMB 8052) (Clostridium acetobutylicum).